The chain runs to 299 residues: HTH-type transcriptional regulator ArgP (299 aa).

One can recognise an HTH lysR-type domain in the interval 4 to 60 (PDYRTLQALDAVIRERGFERAAQKLCITQSAVSQRIKQLENMFGQPLLVRTVPPRPT). The segment at residues 21–40 (FERAAQKLCITQSAVSQRIK) is a DNA-binding region (H-T-H motif).

The protein belongs to the LysR transcriptional regulatory family. As to quaternary structure, homodimer.

Functionally, controls the transcription of genes involved in arginine and lysine metabolism. This chain is HTH-type transcriptional regulator ArgP, found in Erwinia tasmaniensis (strain DSM 17950 / CFBP 7177 / CIP 109463 / NCPPB 4357 / Et1/99).